Here is a 58-residue protein sequence, read N- to C-terminus: Cyclotide trypsin inhibitor TopI1 (58 aa).

An N-terminal signal peptide occupies residues 1 to 23 (MKFIIVLLLLTALTLTSIPVIEG). Positions 24 to 55 (ILKRCKTYDDCKDVCKARKGKCEFGICKCMIK) form a cross-link, cyclopeptide (Ile-Lys). 3 cysteine pairs are disulfide-bonded: cysteine 28–cysteine 45, cysteine 34–cysteine 50, and cysteine 38–cysteine 52. Residue serine 56 is modified to Serine amide.

Post-translationally, this is a cyclic peptide. In terms of tissue distribution, expressed by the venom gland.

It is found in the secreted. First cyclic scorpion trypsin inhibitor (Kd~0.5 nM). Does not inhibit chymotrypsin. The sequence is that of Cyclotide trypsin inhibitor TopI1 from Tityus obscurus (Amazonian scorpion).